The chain runs to 257 residues: 5-oxoprolinase subunit A (257 aa).

The protein belongs to the LamB/PxpA family. As to quaternary structure, forms a complex composed of PxpA, PxpB and PxpC.

It carries out the reaction 5-oxo-L-proline + ATP + 2 H2O = L-glutamate + ADP + phosphate + H(+). In terms of biological role, catalyzes the cleavage of 5-oxoproline to form L-glutamate coupled to the hydrolysis of ATP to ADP and inorganic phosphate. This is 5-oxoprolinase subunit A from Halalkalibacterium halodurans (strain ATCC BAA-125 / DSM 18197 / FERM 7344 / JCM 9153 / C-125) (Bacillus halodurans).